The following is an 89-amino-acid chain: Large ribosomal subunit protein uL24 (89 aa).

This sequence belongs to the universal ribosomal protein uL24 family. In terms of assembly, part of the 50S ribosomal subunit.

One of two assembly initiator proteins, it binds directly to the 5'-end of the 23S rRNA, where it nucleates assembly of the 50S subunit. Its function is as follows. One of the proteins that surrounds the polypeptide exit tunnel on the outside of the subunit. The chain is Large ribosomal subunit protein uL24 from Oenococcus oeni (strain ATCC BAA-331 / PSU-1).